A 523-amino-acid polypeptide reads, in one-letter code: UDP-glucuronosyltransferase 2B16 (523 aa).

A signal peptide spans 1-16 (LLLLLQLSCCFSSGSC). Lysine 129 is modified (N6-succinyllysine). Asparagine 309 carries an N-linked (GlcNAc...) asparagine glycan. A helical membrane pass occupies residues 487 to 503 (VIGFLLACLTITTYLVI).

It belongs to the UDP-glycosyltransferase family.

Its subcellular location is the microsome membrane. It is found in the endoplasmic reticulum membrane. The enzyme catalyses glucuronate acceptor + UDP-alpha-D-glucuronate = acceptor beta-D-glucuronoside + UDP + H(+). Its function is as follows. UDPGT is of major importance in the conjugation and subsequent elimination of potentially toxic xenobiotics and endogenous compounds. Acts on small phenolic agents such as 2-beta-naphthol and 4-methylumbelliferone as well as bulky phenolic compounds like 2-hydroxy- and 4-hydroxybiphenyl. In contrast to 2B13 it is active toward 4-hydroxyesterone. The sequence is that of UDP-glucuronosyltransferase 2B16 (UGT2B16) from Oryctolagus cuniculus (Rabbit).